The primary structure comprises 166 residues: Nascent polypeptide-associated complex subunit beta (166 aa).

2 disordered regions span residues 1–40 (MVLNQEKLAKLQAASRTGGKGTPRRKMAPKPKGPGGEDPK) and 129–166 (HAASQAAAAGTKDDDDVPDVVENFDEADKKETEVDKLD). Residues 35-100 (GGEDPKLQAA…GVDKELTELV (66 aa)) enclose the NAC-A/B domain. Positions 141 to 153 (DDDDVPDVVENFD) are enriched in acidic residues. Basic and acidic residues predominate over residues 154 to 166 (EADKKETEVDKLD).

This sequence belongs to the NAC-beta family. As to quaternary structure, part of the nascent polypeptide-associated complex (NAC), consisting of EGD2 and EGD1. NAC associates with ribosomes via EGD1.

Its subcellular location is the cytoplasm. The protein resides in the nucleus. Component of the nascent polypeptide-associated complex (NAC), a dynamic component of the ribosomal exit tunnel, protecting the emerging polypeptides from interaction with other cytoplasmic proteins to ensure appropriate nascent protein targeting. The NAC complex also promotes mitochondrial protein import by enhancing productive ribosome interactions with the outer mitochondrial membrane and blocks the inappropriate interaction of ribosomes translating non-secretory nascent polypeptides with translocation sites in the membrane of the endoplasmic reticulum. EGD1 may act as a transcription factor that exert a negative effect on the expression of several genes that are transcribed by RNA polymerase II. In Mycosarcoma maydis (Corn smut fungus), this protein is Nascent polypeptide-associated complex subunit beta (EGD1).